We begin with the raw amino-acid sequence, 260 residues long: Acetylglutamate kinase (260 aa).

Substrate is bound by residues 46–47, arginine 68, and asparagine 160; that span reads GG.

The protein belongs to the acetylglutamate kinase family. ArgB subfamily.

Its subcellular location is the cytoplasm. It catalyses the reaction N-acetyl-L-glutamate + ATP = N-acetyl-L-glutamyl 5-phosphate + ADP. Its pathway is amino-acid biosynthesis; L-arginine biosynthesis; N(2)-acetyl-L-ornithine from L-glutamate: step 2/4. Its function is as follows. Catalyzes the ATP-dependent phosphorylation of N-acetyl-L-glutamate. This is Acetylglutamate kinase from Shewanella denitrificans (strain OS217 / ATCC BAA-1090 / DSM 15013).